The following is a 189-amino-acid chain: dCTP deaminase (189 aa).

DCTP contacts are provided by residues lysine 112 to arginine 117, threonine 136 to glutamate 138, glutamine 157, tyrosine 171, and glutamine 181. Catalysis depends on glutamate 138, which acts as the Proton donor/acceptor.

It belongs to the dCTP deaminase family. Homotrimer.

It carries out the reaction dCTP + H2O + H(+) = dUTP + NH4(+). The protein operates within pyrimidine metabolism; dUMP biosynthesis; dUMP from dCTP (dUTP route): step 1/2. Its function is as follows. Catalyzes the deamination of dCTP to dUTP. The polypeptide is dCTP deaminase (Paraburkholderia xenovorans (strain LB400)).